The primary structure comprises 224 residues: Ribonuclease HII (224 aa).

The RNase H type-2 domain occupies Met-1–Arg-210. A divalent metal cation is bound by residues Asp-7, Glu-8, and Asp-105.

Belongs to the RNase HII family. It depends on Mn(2+) as a cofactor. Requires Mg(2+) as cofactor.

It localises to the cytoplasm. The enzyme catalyses Endonucleolytic cleavage to 5'-phosphomonoester.. Endonuclease that specifically degrades the RNA of RNA-DNA hybrids. The sequence is that of Ribonuclease HII (rnhB) from Pyrococcus abyssi (strain GE5 / Orsay).